The sequence spans 674 residues: Fidgetin-like protein 1 (674 aa).

The interval Ser157–Ser179 is disordered. The span at Ala167–Ser179 shows a compositional bias: basic and acidic residues. Residue Lys225 forms a Glycyl lysine isopeptide (Lys-Gly) (interchain with G-Cter in SUMO2) linkage. Phosphoserine is present on Ser259. A necessary and sufficient for interaction with RAD51 region spans residues Phe295–Ile344. Lys339 is subject to N6-acetyllysine. Residues Ala404 and Gly444–Leu449 contribute to the ATP site.

It belongs to the AAA ATPase family. Hexamer. Interacts (via N-terminal one-half region) with RAD51; the interaction is direct. Interacts (via N-terminal one-half region) with SPIDR (via the C-terminal region); the interaction is direct. Interacts with FIRRM; may regulate homologous recombination. Mg(2+) is required as a cofactor.

The protein localises to the nucleus. It localises to the cytoplasm. Its subcellular location is the perinuclear region. It carries out the reaction ATP + H2O = ADP + phosphate + H(+). Functionally, involved in DNA double-strand break (DBS) repair via homologous recombination (HR). Recruited at DSB sites independently of BRCA2, RAD51 and RAD51 paralogs in a H2AX-dependent manner. May regulate osteoblast proliferation and differentiation. May play a role in the control of male meiosis dynamic. In Homo sapiens (Human), this protein is Fidgetin-like protein 1 (FIGNL1).